The following is a 264-amino-acid chain: Eukaryotic translation initiation factor 6 (264 aa).

It belongs to the eIF-6 family. Monomer. Associates with the 60S ribosomal subunit.

Its subcellular location is the cytoplasm. It is found in the nucleus. The protein resides in the nucleolus. In terms of biological role, binds to the 60S ribosomal subunit and prevents its association with the 40S ribosomal subunit to form the 80S initiation complex in the cytoplasm. May also be involved in ribosome biogenesis. In Toxoplasma gondii (strain ATCC 50861 / VEG), this protein is Eukaryotic translation initiation factor 6.